The following is a 305-amino-acid chain: Protoheme IX farnesyltransferase (305 aa).

9 helical membrane passes run Val-28–Val-48, Val-52–His-72, Ile-102–Leu-122, Thr-123–Lys-143, Ile-150–Gly-170, Ala-176–Ile-196, Ile-221–Met-241, Ser-243–Ile-263, and Ile-282–Leu-302.

The protein belongs to the UbiA prenyltransferase family. Protoheme IX farnesyltransferase subfamily.

Its subcellular location is the cell inner membrane. The catalysed reaction is heme b + (2E,6E)-farnesyl diphosphate + H2O = Fe(II)-heme o + diphosphate. It functions in the pathway porphyrin-containing compound metabolism; heme O biosynthesis; heme O from protoheme: step 1/1. Its function is as follows. Converts heme B (protoheme IX) to heme O by substitution of the vinyl group on carbon 2 of heme B porphyrin ring with a hydroxyethyl farnesyl side group. This is Protoheme IX farnesyltransferase from Coxiella burnetii (strain CbuK_Q154) (Coxiella burnetii (strain Q154)).